The following is a 362-amino-acid chain: Protein-glutamate methylesterase/protein-glutamine glutaminase (362 aa).

Residues 10 to 127 enclose the Response regulatory domain; it reads RVLVVDDSAF…SLNMHVARDE (118 aa). Asp61 bears the 4-aspartylphosphate mark. Residues 173-362 enclose the CheB-type methylesterase domain; that stretch reads RLPRRLVLIG…DAITRAVGEG (190 aa). Active-site residues include Ser184, His211, and Asp304.

It belongs to the CheB family. Phosphorylated by CheA. Phosphorylation of the N-terminal regulatory domain activates the methylesterase activity.

Its subcellular location is the cytoplasm. It catalyses the reaction [protein]-L-glutamate 5-O-methyl ester + H2O = L-glutamyl-[protein] + methanol + H(+). It carries out the reaction L-glutaminyl-[protein] + H2O = L-glutamyl-[protein] + NH4(+). Functionally, involved in chemotaxis. Part of a chemotaxis signal transduction system that modulates chemotaxis in response to various stimuli. Catalyzes the demethylation of specific methylglutamate residues introduced into the chemoreceptors (methyl-accepting chemotaxis proteins or MCP) by CheR. Also mediates the irreversible deamidation of specific glutamine residues to glutamic acid. The polypeptide is Protein-glutamate methylesterase/protein-glutamine glutaminase (Symbiobacterium thermophilum (strain DSM 24528 / JCM 14929 / IAM 14863 / T)).